The primary structure comprises 211 residues: Pyridoxine/pyridoxamine 5'-phosphate oxidase (211 aa).

Residues 8–11 (RNEY) and lysine 66 each bind substrate. FMN contacts are provided by residues 61–66 (RVVLLK), 76–77 (FT), lysine 83, and glutamine 105. The substrate site is built by tyrosine 123, arginine 127, and serine 131. Residues 140-141 (QS) and tryptophan 184 each bind FMN. 190-192 (RLH) serves as a coordination point for substrate. Arginine 194 is an FMN binding site.

It belongs to the pyridoxamine 5'-phosphate oxidase family. Homodimer. It depends on FMN as a cofactor.

The catalysed reaction is pyridoxamine 5'-phosphate + O2 + H2O = pyridoxal 5'-phosphate + H2O2 + NH4(+). The enzyme catalyses pyridoxine 5'-phosphate + O2 = pyridoxal 5'-phosphate + H2O2. It participates in cofactor metabolism; pyridoxal 5'-phosphate salvage; pyridoxal 5'-phosphate from pyridoxamine 5'-phosphate: step 1/1. The protein operates within cofactor metabolism; pyridoxal 5'-phosphate salvage; pyridoxal 5'-phosphate from pyridoxine 5'-phosphate: step 1/1. Functionally, catalyzes the oxidation of either pyridoxine 5'-phosphate (PNP) or pyridoxamine 5'-phosphate (PMP) into pyridoxal 5'-phosphate (PLP). The sequence is that of Pyridoxine/pyridoxamine 5'-phosphate oxidase from Mannheimia succiniciproducens (strain KCTC 0769BP / MBEL55E).